The primary structure comprises 495 residues: Neuronal acetylcholine receptor subunit alpha-3 (495 aa).

An N-terminal signal peptide occupies residues 1-21; that stretch reads MARRSRLRRLLLLLLLPVAST. Residues 22 to 240 are Extracellular-facing; sequence SDAEHRLFER…PLFYTINLII (219 aa). N-linked (GlcNAc...) asparagine glycosylation is found at Asn-45 and Asn-162. Cystine bridges form between Cys-149–Cys-163 and Cys-213–Cys-214. The chain crosses the membrane as a helical span at residues 241–256; it reads PCLLISFLTVLVFYLP. The Cytoplasmic segment spans residues 257-258; that stretch reads SD. The helical transmembrane segment at 259-275 threads the bilayer; the sequence is CGEKVTLCISVLLSLTV. Residue Glu-261 participates in Na(+) binding. The Extracellular segment spans residues 276-297; the sequence is FLLVITETIPSTSLVIPLIGEY. Residues 298–316 traverse the membrane as a helical segment; sequence LLFTMIFVTLSIVITVFVL. Over 317–464 the chain is Cytoplasmic; sequence NVHYRTPTTH…QDDWKYVAMV (148 aa). Phosphoserine is present on residues Ser-403 and Ser-406. A helical membrane pass occupies residues 465–483; sequence IDRIFLWVFILVCILGTAG. The Extracellular segment spans residues 484-495; it reads LFLQPLMTRDDA.

This sequence belongs to the ligand-gated ion channel (TC 1.A.9) family. Acetylcholine receptor (TC 1.A.9.1) subfamily. Alpha-3/CHRNA3 sub-subfamily. As to quaternary structure, neuronal AChR is composed of two different types of subunits: alpha and beta. CHRNA3/Alpha-3 subunit can be combined to CHRNB2/beta-2 or CHRNB4/beta-4 to give rise to functional receptors. Part of a complex composed of STUB1/CHIP, VCP/p97, CHRNA3, and UBXN2A that modulates the ubiquitination and endoplasmic reticulum-associated degradation (ERAD) of CHRNA3. Within the complex UBXN2A acts as a scaffold protein required for the interaction of CHRNA3 with VCP/p97, this interaction also inhibits CHRNA3 ubiquitination by STUB1/CHIP and subsequently ERAD. Interacts with UBXN2A (via SEP domain), the interaction is required for the interaction of CHRNA3 in the STUB1:VCP:UBXN2A complex. Interacts with RIC3; which is required for proper folding and assembly. Interacts with LYPD6. Ubiquitinated; by STUB1/CHIP and thereafter degraded by the 26S proteosome complex.

The protein resides in the synaptic cell membrane. The protein localises to the cell membrane. It localises to the endoplasmic reticulum. Its subcellular location is the golgi apparatus. It catalyses the reaction K(+)(in) = K(+)(out). It carries out the reaction Na(+)(in) = Na(+)(out). The catalysed reaction is Ca(2+)(in) = Ca(2+)(out). Its activity is regulated as follows. Activated by a myriad of ligands such as acetylcholine, cytisine, nicotine, choline and epibatidine. The heteropentamer CHRNA3:CHRNB2 activity is blocked by alpha-conotoxins ImI, ImII, PnIA, GID and MII. The heteropentamer CHRNA3:CHRNB4 activity is blocked by the alpha-conotoxin ImI and AuIB. Component of neuronal acetylcholine receptors (nAChRs) that function as pentameric, ligand-gated cation channels with high calcium permeability among other activities. nAChRs are excitatory neurotrasnmitter receptors formed by a collection of nAChR subunits known to mediate synaptic transmission in the nervous system and the neuromuscular junction. Each nAchR subunit confers differential attributes to channel properties, including activation, deactivation and desensitization kinetics, pH sensitivity, cation permeability, and binding to allosteric modulators. CHRNA3 forms heteropentameric neuronal acetylcholine receptors with CHRNB2 and CHRNB4. CHRNA3:CHRNB4 being predominant in neurons of the autonomic ganglia, it is known as ganglionic nicotinic receptor. CHRNA3:CHRNB4 also plays an important role in the habenulo-interpeduncular tract, modulating the mesolimbic dopamine system and affecting reward circuits and addiction. Hypothalamic CHRNA3:CHRNB4 nAChR activation by nicotine leads to activation of POMC neurons and a decrease in food intake. Also expressed in the urothelium where it modulates reflex bladder activity by increasing intracellular calcium through extracellular influx and basal ATP release. This chain is Neuronal acetylcholine receptor subunit alpha-3 (CHRNA3), found in Bos taurus (Bovine).